The following is a 551-amino-acid chain: Hydroxylamine reductase (551 aa).

Residues Cys-3, Cys-6, Cys-18, and Cys-25 each coordinate [2Fe-2S] cluster. Residues His-249, Glu-273, Cys-317, Cys-405, Cys-433, Cys-459, Glu-493, and Lys-495 each coordinate hybrid [4Fe-2O-2S] cluster. Cys-405 carries the post-translational modification Cysteine persulfide.

This sequence belongs to the HCP family. [2Fe-2S] cluster is required as a cofactor. Requires hybrid [4Fe-2O-2S] cluster as cofactor.

The protein localises to the cytoplasm. The enzyme catalyses A + NH4(+) + H2O = hydroxylamine + AH2 + H(+). In terms of biological role, catalyzes the reduction of hydroxylamine to form NH(3) and H(2)O. The sequence is that of Hydroxylamine reductase from Actinobacillus pleuropneumoniae serotype 5b (strain L20).